Here is a 946-residue protein sequence, read N- to C-terminus: Multiple C2 and transmembrane domain-containing protein 1 (946 aa).

2 disordered regions span residues 28–193 (QLGV…QKSS) and 205–229 (LEPA…KGEE). Residues 31–43 (VGKGKGGGGGRAG) show a composition bias toward gly residues. Residues 87-96 (FSSSQPNLCC) are compositionally biased toward polar residues. Over residues 143-163 (PGGRSPDSAPSSSASSSLSSS) the composition is skewed to low complexity. A compositionally biased stretch (basic and acidic residues) spans 169–187 (RGDRIRDEGTRRGSPEAHL). 3 C2 domains span residues 235–353 (KINP…DVTL), 399–516 (QTQS…KLEL), and 550–671 (HKER…AYVL). 15 residues coordinate Ca(2+): Asp270, Asp276, Asp323, Asp325, Asp331, Asp433, Asp439, Asp486, Asp488, Asp494, Asp589, Asp595, Asp641, Asp643, and Asp649. Helical transmembrane passes span 758-778 (FVLF…LLLL) and 861-881 (PFLS…LYFI).

This sequence belongs to the MCTP family. The cofactor is Ca(2+). Expressed in the brain and central nervous system (at protein level). Isoform 1 and isoform 2 are expressed in the brain, kidney, liver, heart, lung, skeletal muscle, testis and spleen. Isoform 2 shows a higher expression in the brain, heart and skeletal muscle.

Its subcellular location is the cytoplasmic vesicle. It is found in the secretory vesicle. The protein resides in the synaptic vesicle membrane. It localises to the recycling endosome. The protein localises to the endoplasmic reticulum membrane. In terms of biological role, calcium sensor which is essential for the stabilization of normal baseline neurotransmitter release and for the induction and long-term maintenance of presynaptic homeostatic plasticity. Overexpression in cultured neurons significantly inhibits neuronal transferrin endocytosis, secretory vesicle retrieval, cell migration, and oxidative stress from glutamate toxicity. This chain is Multiple C2 and transmembrane domain-containing protein 1, found in Rattus norvegicus (Rat).